The primary structure comprises 159 residues: uncharacterized protein (159 aa).

This is an uncharacterized protein from Caenorhabditis elegans.